A 500-amino-acid polypeptide reads, in one-letter code: MINVSFLGLMSGISVLLKTTVIVVGIFEGSNHLEDNGALEGYNDKIMEIVNGYQSFDGKFAEVLPIIGLEKDFPVVVVIGLGKSEDFDENKALKVGGVIYSELNRMKIPDASIVINTDSNVSANIGYGALLRSFKFDKYFVEKKDKNSVYLNKLVLFSKSEPQEVTALFNDLKAEGESIFLARSFVSEPPNILYPETYAQMIYEELSKVGVTVEVFDEDYMKANQMMALLGVGQGSAKKSRLVVMKWNGGDESESPIAFVGKGVTFDTGGISLKPSKGMWDMKYDMAGSASVVGIMRTLAARKAKVNAVGVVGLVENSVDGNAQRPSDVVISMSGQTIEVLNTDAEGRLVLADALWYTQEMFTPKLMVDLATLTGAVVVALGNNQYAGLFSNDDAIANQLIVAGNESGEKLWRLPLDEAYDKLIDSSIADMQNISTKGYGADSITAAQFLQRFVNGVPWVHLDIAGMAWDYEGTEICPKGATGFGVRLLNRFVSKYYESH.

Positions 262 and 267 each coordinate Mn(2+). The active site involves Lys274. Mn(2+)-binding residues include Asp285, Asp344, and Glu346. Residue Arg348 is part of the active site.

The protein belongs to the peptidase M17 family. It depends on Mn(2+) as a cofactor.

It is found in the cytoplasm. It catalyses the reaction Release of an N-terminal amino acid, Xaa-|-Yaa-, in which Xaa is preferably Leu, but may be other amino acids including Pro although not Arg or Lys, and Yaa may be Pro. Amino acid amides and methyl esters are also readily hydrolyzed, but rates on arylamides are exceedingly low.. The catalysed reaction is Release of an N-terminal amino acid, preferentially leucine, but not glutamic or aspartic acids.. Functionally, presumably involved in the processing and regular turnover of intracellular proteins. Catalyzes the removal of unsubstituted N-terminal amino acids from various peptides. The sequence is that of Probable cytosol aminopeptidase from Ehrlichia ruminantium (strain Welgevonden).